The sequence spans 403 residues: NADH-quinone oxidoreductase subunit D (403 aa).

It belongs to the complex I 49 kDa subunit family. In terms of assembly, NDH-1 is composed of 14 different subunits. Subunits NuoB, C, D, E, F, and G constitute the peripheral sector of the complex.

The protein resides in the cell membrane. It catalyses the reaction a quinone + NADH + 5 H(+)(in) = a quinol + NAD(+) + 4 H(+)(out). NDH-1 shuttles electrons from NADH, via FMN and iron-sulfur (Fe-S) centers, to quinones in the respiratory chain. The immediate electron acceptor for the enzyme in this species is believed to be a menaquinone. Couples the redox reaction to proton translocation (for every two electrons transferred, four hydrogen ions are translocated across the cytoplasmic membrane), and thus conserves the redox energy in a proton gradient. This chain is NADH-quinone oxidoreductase subunit D, found in Amoebophilus asiaticus (strain 5a2).